Consider the following 1032-residue polypeptide: Caspase recruitment domain-containing protein 10 (1032 aa).

Disordered regions lie at residues 1-23 (MPGR…SEAE), 253-276 (RARG…EPDN), and 481-553 (EFPS…MSDI). Serine 18 carries the post-translational modification Phosphoserine. Residues 23 to 115 (EEDALWERIE…EHFTLLTGQE (93 aa)) enclose the CARD domain. The stretch at 138–456 (TEVRRLREAR…LEVQLQRAQG (319 aa)) forms a coiled coil. Composition is skewed to basic and acidic residues over residues 261–276 (AEEK…EPDN) and 504–517 (HNSE…KEIN).

CARD10 and BCL10 bind to each other by CARD-CARD interaction. They both participate in a complex with MALT1, where MALT1 binds to BCL10. Interacts with TMEM43; this interaction is essential for EGFR-mediated NF-kappa-B activation. In terms of tissue distribution, detected in adult heart, kidney and liver; lower levels in intestine, placenta, muscle and lung. Also found in fetal lung, liver and kidney.

It localises to the cytoplasm. Functionally, scaffold protein that plays an important role in mediating the activation of NF-kappa-B via BCL10 or EGFR. In Homo sapiens (Human), this protein is Caspase recruitment domain-containing protein 10 (CARD10).